The sequence spans 242 residues: MPYLKRVLLLLVTGLFMSLFAVTATASAQTGGSFFDPFNGYNSGFWQKADGYSNGNMFNCTWRANNVSMTSLGEMRLALTSPAYNKFDCGENRSVQTYGYGLYEVRMKPAKNTGIVSSFFTYTGPTDGTPWDEIDIEFLGKDTTKVQFNYYTNGAGNHEKIVDLGFDAANAYHTYAFDWQPNSIKWYVDGQLKHTATNQIPTTPGKIMMNLWNGTGVDEWLGSYNGVNPLYAHYDWVRYTKK.

The N-terminal stretch at M1–A28 is a signal peptide. Q29 carries the post-translational modification Pyrrolidone carboxylic acid. Positions Q29–K242 constitute a GH16 domain. C60 and C89 form a disulfide bridge. The active-site Nucleophile is E133. E137 (proton donor) is an active-site residue.

The protein belongs to the glycosyl hydrolase 16 family.

The protein localises to the secreted. The enzyme catalyses Hydrolysis of (1-&gt;4)-beta-D-glucosidic linkages in beta-D-glucans containing (1-&gt;3)- and (1-&gt;4)-bonds.. The protein is Beta-glucanase (bglS) of Bacillus subtilis (strain 168).